The sequence spans 408 residues: UPF0496 protein At5g66670 (408 aa).

Helical transmembrane passes span 239–259 and 262–282; these read VVFA…AAMM and PVLS…GMWC.

The protein belongs to the UPF0496 family.

It is found in the membrane. This is UPF0496 protein At5g66670 from Arabidopsis thaliana (Mouse-ear cress).